The primary structure comprises 354 residues: Release factor glutamine methyltransferase (354 aa).

S-adenosyl-L-methionine contacts are provided by residues 174-178 (GSGSG), D197, and N241. 241–244 (NPPY) provides a ligand contact to substrate.

This sequence belongs to the protein N5-glutamine methyltransferase family. PrmC subfamily.

The enzyme catalyses L-glutaminyl-[peptide chain release factor] + S-adenosyl-L-methionine = N(5)-methyl-L-glutaminyl-[peptide chain release factor] + S-adenosyl-L-homocysteine + H(+). In terms of biological role, methylates the class 1 translation termination release factors RF1/PrfA and RF2/PrfB on the glutamine residue of the universally conserved GGQ motif. The polypeptide is Release factor glutamine methyltransferase (Fusobacterium nucleatum subsp. nucleatum (strain ATCC 25586 / DSM 15643 / BCRC 10681 / CIP 101130 / JCM 8532 / KCTC 2640 / LMG 13131 / VPI 4355)).